A 1220-amino-acid polypeptide reads, in one-letter code: Osmosensing histidine protein kinase SLN1 (1220 aa).

Residues 1–22 are Cytoplasmic-facing; the sequence is MRFGLPSKLELTPPFRIGIRTQ. A helical transmembrane segment spans residues 23–46; sequence LTALVSIVALGSLIILAVTTGVYF. The Extracellular segment spans residues 47–333; sequence TSNYKNLRSD…FLSPATKLAK (287 aa). N-linked (GlcNAc...) asparagine glycans are attached at residues asparagine 100, asparagine 138, asparagine 142, asparagine 181, asparagine 224, and asparagine 272. A helical membrane pass occupies residues 334–354; sequence IITGTVIAIGVFVILLTLPLA. At 355-1220 the chain is on the cytoplasmic side; that stretch reads HWAVQPIVRL…AAYQGKKNNK (866 aa). Disordered regions lie at residues 414–433 and 444–500; these read GSTTSVSGHGGSGHGSGAAF and NLGN…HILT. Residues 451 to 468 show a composition bias toward basic and acidic residues; it reads SPPEEENKIPNNHTDAKI. A Phosphoserine modification is found at serine 502. One can recognise a Histidine kinase domain in the interval 573–928; it reads NISHELRTPL…KFTFTLPLNQ (356 aa). The residue at position 576 (histidine 576) is a Phosphohistidine; by autocatalysis. A phosphoserine mark is found at serine 758 and serine 833. Disordered stretches follow at residues 960–1016 and 1040–1081; these read AKSI…DNGG and NSLS…VKDD. Positions 965 to 984 are enriched in polar residues; sequence SRQSTSSVATPATNRSSLTN. A compositionally biased stretch (basic and acidic residues) spans 988–1000; sequence PEVRSKGKHETKD. Phosphoserine occurs at positions 1041 and 1044. Polar residues predominate over residues 1063–1075; sequence LQSTGTATSSRNI. One can recognise a Response regulatory domain in the interval 1089-1210; it reads KILVVEDNHV…KLKTILTEFC (122 aa). Glutamate 1094, aspartate 1095, aspartate 1144, and lysine 1195 together coordinate Mg(2+). Residue aspartate 1144 is modified to 4-aspartylphosphate.

Interacts with DJP1, MOG1 and YPD1. Post-translationally, the phosphorelay mechanism involves the sequential transfer of a phosphate group from His-576 (H1) in the histidine kinase domain (transmitter domain) to Asp-1144 (D1) of the response regulatory domain (receiver domain). This transfer probably occurs between two SLN1 molecules, rather than intramolecularly. The phosphate group is further transferred to 'His-64' (H2) of YPD1 and finally to 'Asp-554' (D2) of SSK1 or 'Asp-427' (D2) of SKN7.

It localises to the cell membrane. The enzyme catalyses ATP + protein L-histidine = ADP + protein N-phospho-L-histidine.. Functionally, histidine kinase that acts as an osmosensor at the plasma membrane. Part of the bifurcated SLN1-YPD1-SKN7/SSK1 two-component regulatory system, which controls activity of the HOG1 pathway and gene expression in response to changes in the osmolarity of the extracellular environment. Under normal osmotic conditions, the histidine kinase autophosphorylates His-576. This phosphate is subsequently transferred to Asp-1144, from where it is relayed to 'His-64' of the phosphorelay intermediate protein YPD1. Under high osmolarity conditions, the histidine kinase is no longer active. The chain is Osmosensing histidine protein kinase SLN1 (SLN1) from Saccharomyces cerevisiae (strain ATCC 204508 / S288c) (Baker's yeast).